Here is a 258-residue protein sequence, read N- to C-terminus: Cruciform cutting endonuclease 1, mitochondrial (258 aa).

The 35-residue stretch at 1–35 (MATVKLSFLQHICKLTGLSRSGRKDELLRRIVDSP) folds into the SAP domain. Mg(2+) contacts are provided by aspartate 46 and aspartate 230.

In terms of assembly, homodimer.

Its subcellular location is the mitochondrion. It carries out the reaction Endonucleolytic cleavage at a junction such as a reciprocal single-stranded crossover between two homologous DNA duplexes (Holliday junction).. Its function is as follows. Capable of resolving Holliday junctions. Specific for 4-way junctions. Seems to be important for the maintenance of mitochondrial DNA. Cleaves fixed junctions at the point of strand exchange. Cleaves after 5'-CT-3' and 5'-TT-3' sequences. The polypeptide is Cruciform cutting endonuclease 1, mitochondrial (cce1) (Schizosaccharomyces pombe (strain 972 / ATCC 24843) (Fission yeast)).